A 374-amino-acid polypeptide reads, in one-letter code: Magnesium-chelatase subunit ChlI (374 aa).

Position 47-54 (47-54) interacts with ATP; it reads GDRGTGKS.

The protein belongs to the Mg-chelatase subunits D/I family.

It catalyses the reaction protoporphyrin IX + Mg(2+) + ATP + H2O = Mg-protoporphyrin IX + ADP + phosphate + 3 H(+). It functions in the pathway porphyrin-containing compound metabolism; chlorophyll biosynthesis. Its function is as follows. Involved in chlorophyll biosynthesis; introduces a magnesium ion into protoporphyrin IX to yield Mg-protoporphyrin IX. In Nostoc sp. (strain PCC 7120 / SAG 25.82 / UTEX 2576), this protein is Magnesium-chelatase subunit ChlI (chlI).